A 303-amino-acid chain; its full sequence is Ribosomal protein uL3 glutamine methyltransferase (303 aa).

This sequence belongs to the protein N5-glutamine methyltransferase family. PrmB subfamily.

The enzyme catalyses L-glutaminyl-[ribosomal protein uL3] + S-adenosyl-L-methionine = N(5)-methyl-L-glutaminyl-[ribosomal protein uL3] + S-adenosyl-L-homocysteine + H(+). Its function is as follows. Methylates large ribosomal subunit protein uL3 on a specific glutamine residue. The chain is Ribosomal protein uL3 glutamine methyltransferase from Neisseria meningitidis serogroup B (strain ATCC BAA-335 / MC58).